Consider the following 599-residue polypeptide: E3 ubiquitin-protein ligase Kcmf1 (599 aa).

The ZZ-type zinc finger occupies 4–60; that stretch reads HEGVSCDSCLKSNFNGRRYKCLICYDYDLCADCYEDGVTSTRHLVEHPMQCILTRSD. Residues Cys-9, Cys-12, Cys-24, Cys-27, Cys-33, Cys-36, His-46, and His-50 each coordinate Zn(2+). The C2H2-type zinc-finger motif lies at 78–101; the sequence is FTCPYCKKMGFSDATLLEHVSAEH. Disordered regions lie at residues 155-193, 229-253, 269-294, 466-486, and 507-599; these read HGGG…PSGR, DRQQ…VSTS, GSGG…NLRT, VEQQ…VNQM, and NTTQ…PDTR. 2 stretches are compositionally biased toward low complexity: residues 160–170 and 180–192; these read RRIPGRTLGGP and SSSS…SPSG. Residues 269–285 show a composition bias toward gly residues; it reads GSGGSGAVGSGSGGGSG. Positions 513-532 are enriched in gly residues; sequence GTGGLGGAGATAAPGGGASG. Positions 538–547 are enriched in basic and acidic residues; it reads TADRGIERRS. Over residues 559–593 the composition is skewed to low complexity; it reads SQQPQQQQQSTANPAASQQKYKQNASAATAAGNTN.

Belongs to the KCMF1 family. In terms of assembly, interacts with poe.

The catalysed reaction is S-ubiquitinyl-[E2 ubiquitin-conjugating enzyme]-L-cysteine + [acceptor protein]-L-lysine = [E2 ubiquitin-conjugating enzyme]-L-cysteine + N(6)-ubiquitinyl-[acceptor protein]-L-lysine.. Functionally, has intrinsic E3 ubiquitin ligase activity and promotes ubiquitination. Involved in the negative regulation of the Ras/MAPK signaling pathway in the wing by acting with the E2 enzyme Unc6 and the putative E3 ligases poe and Ufd4 to mediate the ubiquitination and proteasomal degradation of rl/MAPK. The polypeptide is E3 ubiquitin-protein ligase Kcmf1 (Drosophila melanogaster (Fruit fly)).